Here is a 603-residue protein sequence, read N- to C-terminus: MAKKRDKRLSNINEIKTQIINVKTELKNGVFIFSSPMTIGEFAQKINISGTEIVKEYFLKGKMYTLNHILSEEEIADLCFKHGYDFRVEKEINASNFLDNIEFEDKKEDLETRPPIITIMGHVDHGKTTLIDKIRKSNIVSTESSGITQHTGAYQIIYDNKKITFLDTPGHEAFSAMRARGSKVTDIVILVVAADDGVKPQTKEAIAHAQAANVPIIVFVNKMDKPSKDLNRLKNDLSVSGINLEEWGGDTPIVYGSALKGEGIEKLFENINLQAEILDLKFNPKRHPLGVVIESKMDKGVGSLTTVIVQNGTLHKGDFLVAGPRYGRVKAIYDTNKKPLKKVGAGTPVFVIGLNYAPSAGEKFVGINDEKYAKKLSQEREDSEKQEKFLQQTQTISIRRDNDKKIFNIIIKSDTQGTAEAIKDLILQIANDEIEVIVVSYGIGVINNSDLLLAQTSNSEIIGFNSKPNPNIKQQAEDLNIQINSFDVVYKIVDYLNEKINKMVKPKFEKRTIGRAKILKVFFYSKVGNIAGCLMEEGHVKSDSFVKVYRKNKLIHDGRVETLRKGPDEVKKIEKGFEFGLRIKNFDDIKEDDQLEIIEEFRI.

Residues 112–279 (TRPPIITIMG…NINLQAEILD (168 aa)) enclose the tr-type G domain. A G1 region spans residues 121 to 128 (GHVDHGKT). 121–128 (GHVDHGKT) serves as a coordination point for GTP. A G2 region spans residues 146-150 (GITQH). The segment at 167–170 (DTPG) is G3. GTP-binding positions include 167-171 (DTPGH) and 221-224 (NKMD). Residues 221–224 (NKMD) are G4. A G5 region spans residues 257–259 (SAL).

It belongs to the TRAFAC class translation factor GTPase superfamily. Classic translation factor GTPase family. IF-2 subfamily.

It is found in the cytoplasm. Functionally, one of the essential components for the initiation of protein synthesis. Protects formylmethionyl-tRNA from spontaneous hydrolysis and promotes its binding to the 30S ribosomal subunits. Also involved in the hydrolysis of GTP during the formation of the 70S ribosomal complex. The polypeptide is Translation initiation factor IF-2 (Mycoplasmopsis pulmonis (strain UAB CTIP) (Mycoplasma pulmonis)).